We begin with the raw amino-acid sequence, 215 residues long: Probable transaldolase 1 (215 aa).

The active-site Schiff-base intermediate with substrate is the Lys-83.

It belongs to the transaldolase family. Type 3B subfamily.

The protein localises to the cytoplasm. It catalyses the reaction D-sedoheptulose 7-phosphate + D-glyceraldehyde 3-phosphate = D-erythrose 4-phosphate + beta-D-fructose 6-phosphate. The protein operates within carbohydrate degradation; pentose phosphate pathway; D-glyceraldehyde 3-phosphate and beta-D-fructose 6-phosphate from D-ribose 5-phosphate and D-xylulose 5-phosphate (non-oxidative stage): step 2/3. In terms of biological role, transaldolase is important for the balance of metabolites in the pentose-phosphate pathway. This Bacillus anthracis protein is Probable transaldolase 1.